A 984-amino-acid polypeptide reads, in one-letter code: MGFDDDDEDLVVYGTPIEREEDTSARKRRAVAEAGQLRALPAWKQEVRDEEGRRRFHGAFTGGFSAGYYNTVGTKEGWTPQTFTSSRKNRAEMKKQSIYSFLDEEDIKDMGGNALETSQQYDTFGFTATEHARKQASKEQKERPSAIPGPIPDELVVPATTSIGVKLLMKMGWRQGRSIRDAHADSLYESRREARKAFLALSGTKTGGQKIQVDSHKSDKDDGATESFEELHASGNTPVYVLHPKQDLHGLGFDPFKHAPEFKDRKRLQKSARDRNRSDVSMRGSLLISNSGQYAPGFGIGALEELGVEDEDIYASGFAYEQMEVDIEPSKTASDSNYKLEDRKRGVFLAFKIASSSEYKLERFDPPEIPSDFDGRHKFLTPRQDVNNLSDLAPPEVPAPEDTSLRLLIEGCAAMVARCGKHIEDFYKEKSKTNTQFNFLNEGDGCSYYARKLWEYQQKYIDQQKPDTVQSKSSDKLTAENRGKILGERPLDRSTKSSSSSFPAKEAIQLQSNLADNFVKPISLDGLPEYEKPFRNDPAKQARFEQFLKDKYQGGLRPANLIPTSTMSDVDRARERLDFEAAAETIEKGKEKKAMDPLSLLGLSGINEQRFVSSTESERSIPARDEKSIYPRREEFEWRPSPILCKRFDIVDPFMGKPFHVQRPRSKMDSLIFMSESTTRTNEVESSSIAPQHTSVAGATETEAKGAATDPEIESSSVQRPVDLYKAIFSDDSDDDMAEPLANQPVDPVKTSEDANMVLNRLVAEDFLESLGKELGLDVPPEKPTPPNVLFRSETPSTANAIGISRNRKAITCQEIKENESALDKEEIANASADVPSDNVEELGLKYEKQEHRAEKSRSRSSHRQTQSGSLDSDSTSDQHRSRERRSRHKIRSGTPGSDSSIEHHRSKKRKSHSKHRTRRSRSPYADSSDSQYTKRKHREKRHHRTRNPDTDSSDHEYEERHKSSSRRSSDKDRSRRRSRHHKR.

Positions 130 to 144 (EHARKQASKEQKERP) are enriched in basic and acidic residues. Positions 130–153 (EHARKQASKEQKERPSAIPGPIPD) are disordered. In terms of domain architecture, G-patch spans 160–202 (TTSIGVKLLMKMGWRQGRSIRDAHADSLYESRREARKAFLALS). The stretch at 408-450 (LIEGCAAMVARCGKHIEDFYKEKSKTNTQFNFLNEGDGCSYYA) is one SURP motif repeat. Disordered stretches follow at residues 464-503 (QKPD…SSFP), 679-717 (TRTN…ESSS), 775-806 (LGLD…GISR), and 820-984 (ESAL…HHKR). Positions 473–495 (SSDKLTAENRGKILGERPLDRST) are enriched in basic and acidic residues. A compositionally biased stretch (polar residues) spans 679 to 695 (TRTNEVESSSIAPQHTS). Over residues 697 to 709 (AGATETEAKGAAT) the composition is skewed to low complexity. Positions 814–859 (QEIKENESALDKEEIANASADVPSDNVEELGLKYEKQEHRAEKSRS) form a coiled coil. Residues 843-858 (LGLKYEKQEHRAEKSR) are compositionally biased toward basic and acidic residues. Composition is skewed to basic residues over residues 882 to 892 (SRERRSRHKIR), 905 to 922 (HRSK…RRSR), and 934 to 946 (TKRK…HHRT). A compositionally biased stretch (basic and acidic residues) spans 947 to 974 (RNPDTDSSDHEYEERHKSSSRRSSDKDR). A compositionally biased stretch (basic residues) spans 975-984 (SRRRSRHHKR).

It localises to the nucleus. Its function is as follows. Functions as a component of microRNA (miRNA) and small interfering RNA (siRNA) biogenesis. May assist Dicer-like (DCL) proteins to efficiently process and/or recruit the precursors of miRNAs and siRNAs. This is G patch domain-containing protein TGH homolog from Oryza sativa subsp. japonica (Rice).